The following is a 2542-amino-acid chain: Talin-2 (2542 aa).

The FERM domain maps to 88 to 406 (RPQKIRMLDG…GYIDIILKKK (319 aa)). The tract at residues 312 to 406 (GVSFFLVKEK…GYIDIILKKK (95 aa)) is interaction with PIP5K1C. Phosphoserine is present on residues Ser-428, Ser-449, Ser-623, and Ser-1023. Tyr-1665 is modified (phosphotyrosine). Phosphothreonine is present on Thr-1843. In terms of domain architecture, I/LWEQ spans 2294–2533 (TEWVDPEDPT…QIRQQQYKFL (240 aa)).

In terms of assembly, interacts directly with PIP5K1C.

Its subcellular location is the cytoplasm. It is found in the cell junction. The protein resides in the focal adhesion. It localises to the synapse. The protein localises to the cell membrane. Its subcellular location is the cytoskeleton. Functionally, as a major component of focal adhesion plaques that links integrin to the actin cytoskeleton, may play an important role in cell adhesion. Recruits PIP5K1C to focal adhesion plaques and strongly activates its kinase activity. This Homo sapiens (Human) protein is Talin-2 (TLN2).